The chain runs to 244 residues: Uridylate kinase (244 aa).

Lysine 18 to glycine 21 provides a ligand contact to ATP. The tract at residues glycine 26–glycine 31 is involved in allosteric activation by GTP. Glycine 60 contributes to the UMP binding site. ATP contacts are provided by glycine 61 and arginine 65. UMP is bound by residues aspartate 80 and threonine 141–threonine 148. The ATP site is built by threonine 168, tyrosine 174, and aspartate 177.

It belongs to the UMP kinase family. Homohexamer.

It localises to the cytoplasm. It carries out the reaction UMP + ATP = UDP + ADP. It functions in the pathway pyrimidine metabolism; CTP biosynthesis via de novo pathway; UDP from UMP (UMPK route): step 1/1. Allosterically activated by GTP. Inhibited by UTP. In terms of biological role, catalyzes the reversible phosphorylation of UMP to UDP. In Paracoccus denitrificans (strain Pd 1222), this protein is Uridylate kinase.